We begin with the raw amino-acid sequence, 436 residues long: 3-ketoacyl-CoA thiolase (436 aa).

The active-site Acyl-thioester intermediate is Cys-99. Residues His-392 and Cys-422 each act as proton acceptor in the active site.

This sequence belongs to the thiolase-like superfamily. Thiolase family. Heterotetramer of two alpha chains (FadJ) and two beta chains (FadI).

The protein localises to the cytoplasm. It catalyses the reaction an acyl-CoA + acetyl-CoA = a 3-oxoacyl-CoA + CoA. The protein operates within lipid metabolism; fatty acid beta-oxidation. Catalyzes the final step of fatty acid oxidation in which acetyl-CoA is released and the CoA ester of a fatty acid two carbons shorter is formed. This Shewanella putrefaciens (strain CN-32 / ATCC BAA-453) protein is 3-ketoacyl-CoA thiolase.